Here is a 136-residue protein sequence, read N- to C-terminus: UPF0213 protein ASA_0550 (136 aa).

The 76-residue stretch at 17-92 folds into the GIY-YIG domain; sequence GQWSIYLVRT…KQQSKAFKER (76 aa).

This sequence belongs to the UPF0213 family.

The polypeptide is UPF0213 protein ASA_0550 (Aeromonas salmonicida (strain A449)).